Reading from the N-terminus, the 214-residue chain is MATSEAPLLKRTAATLSDDMAVNYKLLHSPKFRALVVENVLSVTAFAFMARQTESLAGPEMETLNNCGVNGCGFTSFYQFKGVVGVYAAFWVYTVLLIGLYLFSRGPPPGTEFVVHALFTLCMIAFVSLSVISCTSTVIESDYSVCKNAAYAKASLVFAALVVVLNCATCAFVFKQWRSLQFVGMPENFRPFGRHRHKHGHHAGDADDAIPTHP.

At 1-82 the chain is on the cytoplasmic side; it reads MATSEAPLLK…GFTSFYQFKG (82 aa). A helical membrane pass occupies residues 83 to 103; sequence VVGVYAAFWVYTVLLIGLYLF. The Extracellular portion of the chain corresponds to 104-112; that stretch reads SRGPPPGTE. The chain crosses the membrane as a helical span at residues 113 to 133; sequence FVVHALFTLCMIAFVSLSVIS. Topologically, residues 134–153 are cytoplasmic; it reads CTSTVIESDYSVCKNAAYAK. A helical membrane pass occupies residues 154–174; sequence ASLVFAALVVVLNCATCAFVF. Over 175–214 the chain is Extracellular; the sequence is KQWRSLQFVGMPENFRPFGRHRHKHGHHAGDADDAIPTHP. Residues 194-214 form a disordered region; that stretch reads RHRHKHGHHAGDADDAIPTHP.

Belongs to the Casparian strip membrane proteins (CASP) family. In terms of assembly, homodimer and heterodimers.

It localises to the cell membrane. The protein is CASP-like protein 0U1 of Ostreococcus tauri.